The chain runs to 378 residues: UDP-N-acetylglucosamine--N-acetylmuramyl-(pentapeptide) pyrophosphoryl-undecaprenol N-acetylglucosamine transferase (378 aa).

UDP-N-acetyl-alpha-D-glucosamine-binding positions include threonine 14–glycine 16, asparagine 125, arginine 165, serine 193, and glutamine 293.

It belongs to the glycosyltransferase 28 family. MurG subfamily.

It is found in the cell inner membrane. It carries out the reaction di-trans,octa-cis-undecaprenyl diphospho-N-acetyl-alpha-D-muramoyl-L-alanyl-D-glutamyl-meso-2,6-diaminopimeloyl-D-alanyl-D-alanine + UDP-N-acetyl-alpha-D-glucosamine = di-trans,octa-cis-undecaprenyl diphospho-[N-acetyl-alpha-D-glucosaminyl-(1-&gt;4)]-N-acetyl-alpha-D-muramoyl-L-alanyl-D-glutamyl-meso-2,6-diaminopimeloyl-D-alanyl-D-alanine + UDP + H(+). It participates in cell wall biogenesis; peptidoglycan biosynthesis. Its function is as follows. Cell wall formation. Catalyzes the transfer of a GlcNAc subunit on undecaprenyl-pyrophosphoryl-MurNAc-pentapeptide (lipid intermediate I) to form undecaprenyl-pyrophosphoryl-MurNAc-(pentapeptide)GlcNAc (lipid intermediate II). The polypeptide is UDP-N-acetylglucosamine--N-acetylmuramyl-(pentapeptide) pyrophosphoryl-undecaprenol N-acetylglucosamine transferase (Bartonella tribocorum (strain CIP 105476 / IBS 506)).